The primary structure comprises 622 residues: Chaperone protein HscA homolog (622 aa).

This sequence belongs to the heat shock protein 70 family.

Functionally, chaperone involved in the maturation of iron-sulfur cluster-containing proteins. Has a low intrinsic ATPase activity which is markedly stimulated by HscB. This Pseudoalteromonas atlantica (strain T6c / ATCC BAA-1087) protein is Chaperone protein HscA homolog.